Consider the following 277-residue polypeptide: MPAKGVVDMTELSNLVAESLERLRRDKPLVQCLTNIVVANFTANVLLSAGAVPAMVDNPEESEGFASIADGVLVNTGTPYRETTEAMIAAARGAASSNTPWVLDPVGVGMSWRTRVVLDTLDVAAPAVIRANASEVLALAGTGASSRGPEAGDAVEDALASATQLVRHYGCVVAISGPVDHILDADRHVTVSSGHEWMTRVTGVGCSLGALTAAFAGIQNDHLIAAVSATAMLCVVAERAAERSAGPGAFAQALVDELFLVSPDEVGERGGLRDVTA.

Met-55 lines the substrate pocket. ATP-binding residues include Arg-130 and Ser-176. Gly-203 contributes to the substrate binding site.

The protein belongs to the Thz kinase family. Mg(2+) is required as a cofactor.

The catalysed reaction is 5-(2-hydroxyethyl)-4-methylthiazole + ATP = 4-methyl-5-(2-phosphooxyethyl)-thiazole + ADP + H(+). The protein operates within cofactor biosynthesis; thiamine diphosphate biosynthesis; 4-methyl-5-(2-phosphoethyl)-thiazole from 5-(2-hydroxyethyl)-4-methylthiazole: step 1/1. In terms of biological role, catalyzes the phosphorylation of the hydroxyl group of 4-methyl-5-beta-hydroxyethylthiazole (THZ). In Cutibacterium acnes (strain DSM 16379 / KPA171202) (Propionibacterium acnes), this protein is Hydroxyethylthiazole kinase.